Here is a 47-residue protein sequence, read N- to C-terminus: uncharacterized protein (47 aa).

Disordered regions lie at residues 1-20 (MSTD…EEWQ) and 25-47 (EKEK…NRKG). The span at 25–40 (EKEKDENNRLFQEQKQ) shows a compositional bias: basic and acidic residues.

This is an uncharacterized protein from Dictyostelium discoideum (Social amoeba).